Reading from the N-terminus, the 382-residue chain is Type 2 DNA topoisomerase 6 subunit A (382 aa).

The Topo IIA-type catalytic domain maps to 14 to 155; sequence YDPQKVLKKL…MHITADRRGY (142 aa). The active-site O-(5'-phospho-DNA)-tyrosine intermediate is the Tyr108. Residues Glu202 and Asp254 each coordinate Mg(2+).

It belongs to the TOP6A family. In terms of assembly, homodimer. Heterotetramer of two Top6A and two Top6B chains. The cofactor is Mg(2+).

The enzyme catalyses ATP-dependent breakage, passage and rejoining of double-stranded DNA.. Its function is as follows. Relaxes both positive and negative superturns and exhibits a strong decatenase activity. The polypeptide is Type 2 DNA topoisomerase 6 subunit A (Pyrococcus abyssi (strain GE5 / Orsay)).